Consider the following 224-residue polypeptide: Uracil-DNA glycosylase (224 aa).

Asp64 functions as the Proton acceptor in the catalytic mechanism.

It belongs to the uracil-DNA glycosylase (UDG) superfamily. UNG family.

Its subcellular location is the cytoplasm. The catalysed reaction is Hydrolyzes single-stranded DNA or mismatched double-stranded DNA and polynucleotides, releasing free uracil.. In terms of biological role, excises uracil residues from the DNA which can arise as a result of misincorporation of dUMP residues by DNA polymerase or due to deamination of cytosine. The sequence is that of Uracil-DNA glycosylase from Clostridioides difficile (strain 630) (Peptoclostridium difficile).